Consider the following 881-residue polypeptide: Plakophilin-2 (881 aa).

Residues 1 to 348 (MAAPGAPAEY…FTDSQLGNAD (348 aa)) are required for interaction with influenza A virus RNA polymerase subunit PB1. The segment at 1-360 (MAAPGAPAEY…MTLERAVSML (360 aa)) is required for binding to single-stranded DNA. S44 bears the Phosphoserine mark. R46 is subject to Omega-N-methylarginine. S82 bears the Phosphoserine; by MARK3 mark. Residues S132, S135, S151, S154, S155, S169, and S172 each carry the phosphoserine modification. T177 carries the phosphothreonine modification. Residues S183, S197, S251, S294, and S329 each carry the phosphoserine modification. Residues 282-314 (QNRASRSSWHQSSFHSTRTLREAGPSVAVDSSG) are disordered. Low complexity predominate over residues 286-297 (SRSSWHQSSFHS). ARM repeat units follow at residues 341–383 (DSQL…ECFQ), 385–424 (SEAR…NLVF), 427–467 (NDNK…NLRS), 571–616 (DGRK…NLSY), 671–711 (PKGV…NLTA), 719–758 (SVAQ…NLSR), 763–804 (QNEI…NIIQ), and 807–849 (YQNA…SLWA).

It belongs to the beta-catenin family. Interacts with DSC2. Interacts with JUP. Interacts with KRT5/CK5, KRT8/CK8, KRT14/CK14, KRT18/CK18 and VIM. Interacts (via N-terminus) with MARK3/C-TAK1. Interacts with DSP. Interacts with DSG1, DSG2 and DSG3. Interacts (via N-terminus) with CTNNB1. Interacts with CDH1. Interacts with the RNA polymerase III (Pol III) complex proteins POLR3A/RPC155, POLR3F/RPC39 and POLR3C/RPC82. Interacts with CTNNA3. Interacts (via N-terminus) with SCN5A/Nav1.5. Interacts with ANK3/ANKG and GJA1/CX43. As to quaternary structure, (Microbial infection) Interacts (via N-terminus) with influenza A virus RNA polymerase subunit PB1 (via C-terminus); the interaction competitively inhibits the interaction between the subunits PB1 and PB2. Expressed at intercalated disks in the heart (at protein level). Expressed in gingival epithelial, endothelial and fibroblast cells (at protein level). Faintly expressed in tracheal epithelial cells (at protein level). Widely expressed. Found at desmosomal plaques in simple and stratified epithelia and in non-epithelial tissues such as myocardium and lymph node follicles. In most stratified epithelia found in the desmosomes of the basal cell layer and seems to be absent from suprabasal strata. As to expression, (Microbial infection) Abundantly expressed in tracheal epithelial cells following influenza A virus infection (at protein level).

The protein resides in the nucleus. It localises to the cell junction. The protein localises to the desmosome. Its subcellular location is the cytoplasm. Functionally, a component of desmosome cell-cell junctions which are required for positive regulation of cellular adhesion. Regulates focal adhesion turnover resulting in changes in focal adhesion size, cell adhesion and cell spreading, potentially via transcriptional modulation of beta-integrins. Required to maintain gingival epithelial barrier function. Important component of the desmosome that is also required for localization of desmosome component proteins such as DSC2, DSG2 and JUP to the desmosome cell-cell junction. Required for the formation of desmosome cell junctions in cardiomyocytes, thereby required for the correct formation of the heart, specifically trabeculation and formation of the atria walls. Loss of desmosome cell junctions leads to mis-localization of DSP and DSG2 resulting in disruption of cell-cell adhesion and disordered intermediate filaments. Modulates profibrotic gene expression in cardiomyocytes via regulation of DSP expression and subsequent activation of downstream TGFB1 and MAPK14/p38 MAPK signaling. Required for cardiac sodium current propagation and electrical synchrony in cardiac myocytes, via ANK3 stabilization and modulation of SCN5A/Nav1.5 localization to cell-cell junctions. Required for mitochondrial function, nuclear envelope integrity and positive regulation of SIRT3 transcription via maintaining DES localization at its nuclear envelope and cell tip anchoring points, and thereby preserving regulation of the transcriptional program. Maintenance of nuclear envelope integrity protects against DNA damage and transcriptional dysregulation of genes, especially those involved in the electron transport chain, thereby preserving mitochondrial function and protecting against superoxide radical anion generation. Binds single-stranded DNA (ssDNA). May regulate the localization of GJA1 to gap junctions in intercalated disks of the heart. Involved in the inhibition of viral infection by influenza A viruses (IAV). Acts as a host restriction factor for IAV viral propagation, potentially via disrupting the interaction of IAV polymerase complex proteins. The sequence is that of Plakophilin-2 from Homo sapiens (Human).